Here is a 59-residue protein sequence, read N- to C-terminus: Large ribosomal subunit protein bL32 (59 aa).

Positions 1–16 (MAVPKRKTSPSKRGMR) are enriched in basic residues. Positions 1-20 (MAVPKRKTSPSKRGMRRSHD) are disordered.

Belongs to the bacterial ribosomal protein bL32 family.

The sequence is that of Large ribosomal subunit protein bL32 from Sphingopyxis alaskensis (strain DSM 13593 / LMG 18877 / RB2256) (Sphingomonas alaskensis).